The chain runs to 647 residues: DNA mismatch repair protein MutL (647 aa).

The protein belongs to the DNA mismatch repair MutL/HexB family.

This protein is involved in the repair of mismatches in DNA. It is required for dam-dependent methyl-directed DNA mismatch repair. May act as a 'molecular matchmaker', a protein that promotes the formation of a stable complex between two or more DNA-binding proteins in an ATP-dependent manner without itself being part of a final effector complex. This chain is DNA mismatch repair protein MutL, found in Koribacter versatilis (strain Ellin345).